We begin with the raw amino-acid sequence, 1741 residues long: Protein wings apart-like (1741 aa).

9 disordered regions span residues 68 to 100, 119 to 277, 291 to 472, 490 to 612, 675 to 810, 823 to 963, 1038 to 1068, 1112 to 1141, and 1708 to 1741; these read SPSQ…FFKS, CGAG…EVAA, SSTF…KPPK, KAAA…VQED, LAVL…ASVN, KAEA…QRGA, AAGK…STLR, SAAG…RVDR, and TSST…SSHR. A compositionally biased stretch (basic residues) spans 165–174; the sequence is RKRKSPKKKA. Low complexity predominate over residues 175–185; it reads ATTSASTPSTP. T258 carries the phosphothreonine modification. A compositionally biased stretch (low complexity) spans 309–334; the sequence is APSASASTSSQLPSASGSASNPPSAS. S355 carries the phosphoserine modification. Residues 367–377 show a composition bias toward polar residues; sequence AHQNQLNQLSV. The segment covering 408 to 426 has biased composition (low complexity); that stretch reads AADSVDGSSAAVGGASAGD. Over residues 438–456 the composition is skewed to acidic residues; sequence PNEDEEEEEEEEDEEEEPP. Residues 503 to 512 show a composition bias toward basic residues; sequence SRSKKHKHKQ. Low complexity-rich tracts occupy residues 515–529 and 553–568; these read AAGS…ATPA and QHTP…LHPQ. The span at 586 to 604 shows a compositional bias: polar residues; that stretch reads SQSSVLGSISSKGNSTPQL. 2 stretches are compositionally biased toward low complexity: residues 796–810 and 849–859; these read NAAA…ASVN and QQVTQVLQQEP. Residues 860–873 show a composition bias toward acidic residues; it reads VPEEQETPDAEEEQ. Residues 880–894 show a composition bias toward basic and acidic residues; that stretch reads PHTDHREHSPDHDPD. Position 888 is a phosphoserine (S888). Composition is skewed to low complexity over residues 939-952 and 1047-1065; these read GAAN…AAAA and GDSP…SSAS. Gly residues predominate over residues 1117–1136; the sequence is SAGGTGATTGGGGATGGGGP. The region spanning 1140–1648 is the WAPL domain; the sequence is DRKTKDYYPV…EKYHTFMNLT (509 aa). The span at 1708–1730 shows a compositional bias: low complexity; the sequence is TSSTTVGSGSAPSSTSATGTTRA.

This sequence belongs to the WAPL family.

Has a role in female meiotic chromosome segregation in females; proximal heterochromatin is involved in chromosome pairing during female meiosis. Is a dominant suppressor of both white and Stubble position-effect variegation (PEV), while it is a weak enhancer of brown variegation. The chain is Protein wings apart-like from Drosophila melanogaster (Fruit fly).